A 712-amino-acid polypeptide reads, in one-letter code: Eukaryotic translation initiation factor 3 subunit B (712 aa).

The tract at residues 1-98 (MSLTEAEYHE…LFVQFETSEM (98 aa)) is sufficient for interaction with HCR1 and TIF32. Residues 1–224 (MSLTEAEYHE…GVQSWGGADF (224 aa)) are sufficient for interaction with PIC8. One can recognise an RRM domain in the interval 37–124 (NYVVVDGAPI…HRLLVNRLSD (88 aa)). WD repeat units lie at residues 191-229 (RKFFTSKYAKFSPKGTYLFSIHPQGVQSWGGADFSSIDK), 230-293 (FMHN…RTFA), 301-339 (QKEMPWPLVKWSHDDKYCARQGPGALAVYETPSFQLLDK), 342-384 (IKID…QTAR), 452-493 (ELKE…DFYA), 513-555 (ITDK…SNKN), and 566-604 (DKFSGMTNISWDPSGRFVATWSSSWLHTIENGYKLYEFT).

Belongs to the eIF-3 subunit B family. In terms of assembly, component of the eukaryotic translation initiation factor 3 (eIF-3) complex.

It is found in the cytoplasm. Functionally, RNA-binding component of the eukaryotic translation initiation factor 3 (eIF-3) complex, which is involved in protein synthesis of a specialized repertoire of mRNAs and, together with other initiation factors, stimulates binding of mRNA and methionyl-tRNAi to the 40S ribosome. The eIF-3 complex specifically targets and initiates translation of a subset of mRNAs involved in cell proliferation. The chain is Eukaryotic translation initiation factor 3 subunit B from Scheffersomyces stipitis (strain ATCC 58785 / CBS 6054 / NBRC 10063 / NRRL Y-11545) (Yeast).